The primary structure comprises 119 residues: Protein TusC (119 aa).

The protein belongs to the DsrF/TusC family. In terms of assembly, heterohexamer, formed by a dimer of trimers. The hexameric TusBCD complex contains 2 copies each of TusB, TusC and TusD. The TusBCD complex interacts with TusE.

Its subcellular location is the cytoplasm. Its function is as follows. Part of a sulfur-relay system required for 2-thiolation of 5-methylaminomethyl-2-thiouridine (mnm(5)s(2)U) at tRNA wobble positions. In Shigella dysenteriae serotype 1 (strain Sd197), this protein is Protein TusC.